The following is an 806-amino-acid chain: MKFTAIVGTTSPKSYNRTLLQFMQAHFKDKADIELLEIDQVPMFNQDQPSTNPQLLEINQKIIASDGVIIATPEYNHSIPSSLKSVLEWLSYELHPLDGKPVMILGASIDAQGSSRAQLHLRQILDAPGVNANVMPGYEFLLGNAHQAFDDKGQLNNEATIDFLEICFFRFMRFAKISNQLNVEEDFSFAPGTYEVHALGHGGALPMQVSFSEKKIESIHIDTAGETEGLADVVFVRIPDKIIEGQTLNVDALSGASETSHAVIDGVAKAVKLAGVNPDILKKRPKPASSLNRDDEEYSCDVVVIGGGGAGLSAAATVLQAGKNAIVLEKFPAVGGNTIRTGGPINAADPEWQRTFDENPGERHTIEALLSTDESEIHPEYLADFRALKEEFAAYQQQFGDQKGYLFDSPLLHRMQTYFGGKRTDLEGNSIYGQYDLVKILTDHALESVQWLEEIGVEYDKEVVFAPVGALWRRGHKPVKRYGTAFILALSRYIESMSGTILTDSPAKEFLIEDGEIKGVIATGVNGQKITIHAKAVVLASGGFGANTKMLQQYNTYWSHIADDIKTTNSYAMTGDGIVLGQSVGAGLIGMGFTQMMPVADPNTGELFSGLQVPPENFVIVNQQGKRFVNEFAGRDVLTKAALAEGGLFYLIADDEIKKTAANTSQEKIDRQVEAGTLFRADTLEELAVQVGMEPDVLVETINKYNRYVEAGHDPEFHKDTFSLKVEKAPFYATPRQPAVHHTMGGLKIDTATRVLNENNRPIKHLYAAGEVAGGIHAGNRLGGNALADIFTFGRIAGKTAMSEMD.

Ser-257 carries the FMN phosphoryl serine modification. Positions 310, 329, 337, 338, 342, 343, and 576 each coordinate FAD. Arg-635 functions as the Proton donor in the catalytic mechanism. Positions 742, 771, 786, and 787 each coordinate FAD.

It belongs to the FAD-dependent oxidoreductase 2 family. FRD/SDH subfamily. NADH:(hydroxy)cinnamate reductase Crd is a heterodimer composed of CrdA and CrdB subunits, encoded by adjacent genes. It depends on FAD as a cofactor. The cofactor is FMN. Post-translationally, is flavinylated on Ser-257 by ApbE, encoded in a neighboring gene. Covalent attachment of FMN is essential for catalytic activity.

The enzyme catalyses 3-phenylpropanoate + NAD(+) = (E)-cinnamate + NADH + H(+). It carries out the reaction 3-(3,4-dihydroxyphenyl)propanoate + NAD(+) = (E)-caffeate + NADH + H(+). The catalysed reaction is phloretate + NAD(+) = (E)-4-coumarate + NADH + H(+). It catalyses the reaction dihydroferulate + NAD(+) = (E)-ferulate + NADH + H(+). Its activity is regulated as follows. Is inactivated by molecular oxygen, allowing regulation of Crd activity by medium oxygen level. Its function is as follows. Component of the NADH:(hydroxy)cinnamate reductase Crd that catalyzes the reduction of the double bond in cinnamate, p-coumarate, caffeate, and ferulate under anaerobic conditions with NADH or methyl viologen as the electron donor. Is moderately active against acrylate and practically inactive against urocanate, fumarate, methacrylate and crotonate. CrdB is the catalytic subunit that binds substrates. Is likely involved in protecting V.ruber from (hydroxy)cinnamate poisoning. The protein is NADH:(hydroxy)cinnamate reductase subunit CrdB of Vibrio ruber (strain DSM 16370 / JCM 11486 / BCRC 17186 / CECT 7878 / LMG 23124 / VR1).